Reading from the N-terminus, the 150-residue chain is uncharacterized protein (150 aa).

It to A.tumefaciens conjugal transfer protein TraB.

This is an uncharacterized protein from Agrobacterium tumefaciens (strain 15955).